Consider the following 87-residue polypeptide: Large ribosomal subunit protein bL27 (87 aa).

Positions 1 to 25 (MAHKKGASSSRNGRDSNAQRLGVKR) are disordered. Residues 7 to 19 (ASSSRNGRDSNAQ) show a composition bias toward polar residues.

Belongs to the bacterial ribosomal protein bL27 family.

This is Large ribosomal subunit protein bL27 from Rhodococcus jostii (strain RHA1).